Reading from the N-terminus, the 181-residue chain is Large ribosomal subunit protein uL5c (181 aa).

The protein belongs to the universal ribosomal protein uL5 family. Part of the 50S ribosomal subunit; contacts the 5S rRNA.

The protein localises to the plastid. It is found in the chloroplast. Its function is as follows. Binds 5S rRNA, forms part of the central protuberance of the 50S subunit. The protein is Large ribosomal subunit protein uL5c (rpl5) of Rhodomonas salina (Cryptomonas salina).